The chain runs to 132 residues: Ribosome-binding factor A (132 aa).

It belongs to the RbfA family. As to quaternary structure, monomer. Binds 30S ribosomal subunits, but not 50S ribosomal subunits or 70S ribosomes.

Its subcellular location is the cytoplasm. Its function is as follows. One of several proteins that assist in the late maturation steps of the functional core of the 30S ribosomal subunit. Associates with free 30S ribosomal subunits (but not with 30S subunits that are part of 70S ribosomes or polysomes). Required for efficient processing of 16S rRNA. May interact with the 5'-terminal helix region of 16S rRNA. This chain is Ribosome-binding factor A, found in Pseudomonas putida (strain W619).